A 196-amino-acid polypeptide reads, in one-letter code: Imidazole glycerol phosphate synthase subunit HisH (196 aa).

Residues 2 to 196 enclose the Glutamine amidotransferase type-1 domain; that stretch reads KVAVIKYNAG…ERIIKNFLEL (195 aa). Cysteine 77 acts as the Nucleophile in catalysis. Catalysis depends on residues histidine 178 and glutamate 180.

In terms of assembly, heterodimer of HisH and HisF.

Its subcellular location is the cytoplasm. The catalysed reaction is 5-[(5-phospho-1-deoxy-D-ribulos-1-ylimino)methylamino]-1-(5-phospho-beta-D-ribosyl)imidazole-4-carboxamide + L-glutamine = D-erythro-1-(imidazol-4-yl)glycerol 3-phosphate + 5-amino-1-(5-phospho-beta-D-ribosyl)imidazole-4-carboxamide + L-glutamate + H(+). The enzyme catalyses L-glutamine + H2O = L-glutamate + NH4(+). It functions in the pathway amino-acid biosynthesis; L-histidine biosynthesis; L-histidine from 5-phospho-alpha-D-ribose 1-diphosphate: step 5/9. IGPS catalyzes the conversion of PRFAR and glutamine to IGP, AICAR and glutamate. The HisH subunit catalyzes the hydrolysis of glutamine to glutamate and ammonia as part of the synthesis of IGP and AICAR. The resulting ammonia molecule is channeled to the active site of HisF. The sequence is that of Imidazole glycerol phosphate synthase subunit HisH from Bacteroides fragilis (strain ATCC 25285 / DSM 2151 / CCUG 4856 / JCM 11019 / LMG 10263 / NCTC 9343 / Onslow / VPI 2553 / EN-2).